The following is a 736-amino-acid chain: Peroxisomal multifunctional enzyme type 2 (736 aa).

The (3R)-hydroxyacyl-CoA dehydrogenase stretch occupies residues 1 to 305; that stretch reads MGSPLRFDGR…IEVLSKIDSE (305 aa). NAD(+) is bound by residues 13-37, Leu21, and Asp40; that span reads LVTG…ALVV. Lys46 carries the N6-acetyllysine; alternate modification. An N6-succinyllysine; alternate modification is found at Lys46. Ser52 bears the Phosphoserine mark. Residues Lys57 and Lys68 each carry the N6-succinyllysine modification. 75-76 provides a ligand contact to NAD(+); that stretch reads SV. Lys84 carries the post-translational modification N6-succinyllysine. Asn99 lines the NAD(+) pocket. Ser151 is a substrate binding site. Tyr164 (proton acceptor) is an active-site residue. NAD(+) contacts are provided by residues 164–168 and 196–199; these read YSAAK and AGSR. The residue at position 265 (Thr265) is a Phosphothreonine. Lys275 bears the N6-succinyllysine mark. Ser304 and Ser309 each carry phosphoserine. Residues 322–622 are enoyl-CoA hydratase 2; it reads SGFAGAIGQK…AKTPSEGGKL (301 aa). Lys356 is subject to N6-succinyllysine. 406–407 contacts (3R)-3-hydroxydecanoyl-CoA; sequence HG. Lys424 is subject to N6-succinyllysine. (3R)-3-hydroxydecanoyl-CoA-binding positions include Lys435, 510–515, Gly533, and Phe563; that span reads DWNPLH. The region spanning 484–600 is the MaoC-like domain; sequence IPNRPPDAVL…QETGDIVISN (117 aa). N6-acetyllysine is present on Lys565. 2 positions are modified to N6-succinyllysine: Lys579 and Lys663. Residues 624–736 form the SCP2 domain; sequence STFVFEEIGR…QMILKDYAKL (113 aa). Lys669 is modified (N6-acetyllysine). A substrate-binding site is contributed by Gln706. Lys707 is subject to N6-acetyllysine. Residue Gln724 participates in substrate binding. Residue Lys725 is modified to N6-succinyllysine. Residues 734–736 carry the Microbody targeting signal motif; the sequence is AKL.

It belongs to the short-chain dehydrogenases/reductases (SDR) family. As to quaternary structure, homodimer. In terms of tissue distribution, present in many tissues with highest concentrations in liver, heart, prostate and testis.

It is found in the peroxisome. The catalysed reaction is a (3R)-3-hydroxyacyl-CoA + NAD(+) = a 3-oxoacyl-CoA + NADH + H(+). It catalyses the reaction a (3R)-3-hydroxyacyl-CoA = a (2E)-enoyl-CoA + H2O. The enzyme catalyses (24R,25R)-3alpha,7alpha,12alpha,24-tetrahydroxy-5beta-cholestan-26-oyl-CoA = (24E)-3alpha,7alpha,12alpha-trihydroxy-5beta-cholest-24-en-26-oyl-CoA + H2O. It carries out the reaction (2E)-octenoyl-CoA + H2O = (3R)-hydroxyoctanoyl-CoA. The catalysed reaction is (3R)-hydroxyoctanoyl-CoA + NAD(+) = 3-oxooctanoyl-CoA + NADH + H(+). It catalyses the reaction (3R)-hydroxyhexadecanoyl-CoA + NAD(+) = 3-oxohexadecanoyl-CoA + NADH + H(+). The enzyme catalyses (2E)-hexadecenedioyl-CoA + H2O = (3R)-hydroxyhexadecanedioyl-CoA. It carries out the reaction (3R)-hydroxyhexadecanedioyl-CoA + NAD(+) = 3-oxohexadecanedioyl-CoA + NADH + H(+). The catalysed reaction is (3R)-hydroxyhexadecanoyl-CoA = (2E)-hexadecenoyl-CoA + H2O. It catalyses the reaction (3R)-3-hydroxydecanoyl-CoA = (2E)-decenoyl-CoA + H2O. The enzyme catalyses (3R)-3-hydroxydecanoyl-CoA + NAD(+) = 3-oxodecanoyl-CoA + NADH + H(+). It carries out the reaction (24R,25R)-3alpha,7alpha,12alpha,24-tetrahydroxy-5beta-cholestan-26-oyl-CoA + NAD(+) = 3alpha,7alpha,12alpha-trihydroxy-24-oxo-5beta-cholestan-26-oyl-CoA + NADH + H(+). It functions in the pathway lipid metabolism; fatty acid beta-oxidation. In terms of biological role, bifunctional enzyme acting on the peroxisomal fatty acid beta-oxidation pathway. Catalyzes two of the four reactions in fatty acid degradation: hydration of 2-enoyl-CoA (trans-2-enoyl-CoA) to produce (3R)-3-hydroxyacyl-CoA, and dehydrogenation of (3R)-3-hydroxyacyl-CoA to produce 3-ketoacyl-CoA (3-oxoacyl-CoA), which is further metabolized by SCPx. Can use straight-chain and branched-chain fatty acids, as well as bile acid intermediates as substrates. This is Peroxisomal multifunctional enzyme type 2 from Homo sapiens (Human).